The sequence spans 308 residues: Energy-coupling factor transporter ATP-binding protein EcfA2 (308 aa).

Positions 3-263 (IEVKNISKVF…VDFLRENEME (261 aa)) constitute an ABC transporter domain. 40-47 (GPTGSGKT) provides a ligand contact to ATP.

It belongs to the ABC transporter superfamily. Energy-coupling factor EcfA family. Forms a stable energy-coupling factor (ECF) transporter complex composed of 2 membrane-embedded substrate-binding proteins (S component), 2 ATP-binding proteins (A component) and 2 transmembrane proteins (T component).

It localises to the cell membrane. In terms of biological role, ATP-binding (A) component of a common energy-coupling factor (ECF) ABC-transporter complex. Unlike classic ABC transporters this ECF transporter provides the energy necessary to transport a number of different substrates. In Mycoplasma mobile (strain ATCC 43663 / 163K / NCTC 11711) (Mesomycoplasma mobile), this protein is Energy-coupling factor transporter ATP-binding protein EcfA2.